A 645-amino-acid polypeptide reads, in one-letter code: Cell pattern formation-associated protein stuA (645 aa).

The tract at residues 1 to 52 (MNQMQPYADVHQPHMSTAAHAPASGPPAGLSHYSYPHQPSMMQPQQQQHQYG) is disordered. Residues 18 to 52 (AAHAPASGPPAGLSHYSYPHQPSMMQPQQQQHQYG) show a composition bias toward low complexity. Residues 124-230 (RVTATLWEDE…HDIGALLYHP (107 aa)) enclose the HTH APSES-type domain. A DNA-binding region (H-T-H motif) is located at residues 158-179 (GTKLLNVAGMTRGRRDGILKSE). Positions 246 to 645 (VDRNRRPDSM…HTLAAQRARR (400 aa)) are disordered. 2 stretches are compositionally biased toward polar residues: residues 254-271 (SMQT…SQAP) and 279-288 (MTNSVGSAMS). The span at 317–330 (SASSMMGMGNQGSS) shows a compositional bias: low complexity. Polar residues predominate over residues 336–365 (ANVQQHPQGNQPLSIDTGLSNARSVPTTPA). Low complexity predominate over residues 469 to 481 (PYNGNRGPYGYNP). 2 stretches are compositionally biased toward polar residues: residues 502-542 (SPHQ…NLYN) and 569-584 (YASQ…NSSG). The nuclear localization domain stretch occupies residues 585–613 (KRGRDEEDAETYRPDSVQGDDMGGLKRRK). Basic and acidic residues predominate over residues 586 to 597 (RGRDEEDAETYR).

It belongs to the EFG1/PHD1/stuA family.

The protein resides in the nucleus. Its function is as follows. Transcription factor that regulates asexual reproduction. Binds the StuA-response elements (StRE) with the consensus sequence 5'-(A/T)CGCG(T/A)N(A/C)-3' at the promoters of target genes. Regulates the expression of several effector genes (AvrLm1, AvrLm6 and AvrLm4-7) during infection stage. The polypeptide is Cell pattern formation-associated protein stuA (Leptosphaeria maculans (strain JN3 / isolate v23.1.3 / race Av1-4-5-6-7-8) (Blackleg fungus)).